The sequence spans 449 residues: Ribulose bisphosphate carboxylase large chain (449 aa).

Residue Lys-5 is modified to N6,N6,N6-trimethyllysine. Residues Asn-114 and Thr-164 each contribute to the substrate site. Lys-166 (proton acceptor) is an active-site residue. Substrate is bound at residue Lys-168. Mg(2+) is bound by residues Lys-192, Asp-194, and Glu-195. Lys-192 carries the N6-carboxylysine modification. His-285 serves as the catalytic Proton acceptor. Residues Arg-286, His-318, and Ser-370 each coordinate substrate.

This sequence belongs to the RuBisCO large chain family. Type I subfamily. Heterohexadecamer of 8 large chains and 8 small chains; disulfide-linked. The disulfide link is formed within the large subunit homodimers. It depends on Mg(2+) as a cofactor. In terms of processing, the disulfide bond which can form in the large chain dimeric partners within the hexadecamer appears to be associated with oxidative stress and protein turnover.

It is found in the plastid. The protein localises to the chloroplast. The enzyme catalyses 2 (2R)-3-phosphoglycerate + 2 H(+) = D-ribulose 1,5-bisphosphate + CO2 + H2O. It carries out the reaction D-ribulose 1,5-bisphosphate + O2 = 2-phosphoglycolate + (2R)-3-phosphoglycerate + 2 H(+). In terms of biological role, ruBisCO catalyzes two reactions: the carboxylation of D-ribulose 1,5-bisphosphate, the primary event in carbon dioxide fixation, as well as the oxidative fragmentation of the pentose substrate in the photorespiration process. Both reactions occur simultaneously and in competition at the same active site. This chain is Ribulose bisphosphate carboxylase large chain, found in Zamioculcas zamiifolia (Aroid palm).